The sequence spans 637 residues: Nucleoside triphosphatase I (637 aa).

The Helicase ATP-binding domain occupies 43–205; that stretch reads FLGLNSMNSI…QMLVNLLRPG (163 aa). 56 to 63 provides a ligand contact to ATP; sequence QETGVGKT. Positions 142-145 match the DEXH box motif; it reads DECH. Positions 358–537 constitute a Helicase C-terminal domain; sequence ELYNYLYEHS…QLYKVFKHSS (180 aa). The tract at residues 459–526 is binding to the cap-specific mRNA (nucleoside-2'-O-)-methyltransferase; sequence DIFILDMTWN…DIIQSKSKEF (68 aa).

It belongs to the helicase family. NPH I subfamily. As to quaternary structure, monomer. Interacts (via C-terminus) with RAP94 (via N-terminus). Interacts with the cap-specific mRNA (nucleoside-2'-O-)-methyltransferase.

The protein resides in the virion. The enzyme catalyses a ribonucleoside 5'-triphosphate + H2O = a ribonucleoside 5'-diphosphate + phosphate + H(+). In terms of biological role, DNA-dependent ATPase required for providing the needed energy to achieve the termination of early transcripts. Acts in concert with the RAP94 subunit of the virion RNA polymerase and the capping enzyme/VTF to catalyze release of UUUUUNU-containing nascent RNA from the elongation complex. NPH-I must bind ssDNA in order to exhibit ATPase activity. This Vertebrata (FPV) protein is Nucleoside triphosphatase I (NPH1).